The primary structure comprises 454 residues: MSTTDTIVAQATPPGRGGVGILRVSGRAAATVAQAVLGKLPKPRYADYLPFKDVDGSTLDQGIALYFPGPNSFTGEDVLELQGHGGPVILDLLLKRILALPGLRIARPGEFSERAFLNDKLDLAQAEAIADLIDASSEQAARSAVNSLQGAFSVRIHQLVEALTHLRIYVEAAIDFPDEEIDFLSDGKIEGQLNGVMADLEQVRTEARQGSLLREGMKVVIAGRPNAGKSSLLNALAGREAAIVTDIAGTTRDVLREHIHIDGMPLHIIDTAGLREASDEVERIGIERAWHEIEQADRVLFMVDGTTTDATEPAAIWPEFMARLPATLPITVVRNKADITGETLGLTEVNGHSLIRLSARTGEGIDLLRNHLKQSMGFTSNTEGGFLARRRHLQALETAAQHLAQGHEQLVSAYAGELLAEELRLAQQSLSEITGEFSSDDLLGRIFSSFCIGK.

3 residues coordinate (6S)-5-formyl-5,6,7,8-tetrahydrofolate: Arg-23, Glu-80, and Lys-120. The region spanning 216-377 (GMKVVIAGRP…LRNHLKQSMG (162 aa)) is the TrmE-type G domain. Asn-226 serves as a coordination point for K(+). Residues 226-231 (NAGKSS), 245-251 (TDIAGTT), 270-273 (DTAG), 335-338 (NKAD), and 358-360 (SAR) contribute to the GTP site. Ser-230 provides a ligand contact to Mg(2+). The K(+) site is built by Thr-245, Ile-247, and Thr-250. Residue Thr-251 coordinates Mg(2+). Lys-454 serves as a coordination point for (6S)-5-formyl-5,6,7,8-tetrahydrofolate.

Belongs to the TRAFAC class TrmE-Era-EngA-EngB-Septin-like GTPase superfamily. TrmE GTPase family. As to quaternary structure, homodimer. Heterotetramer of two MnmE and two MnmG subunits. K(+) serves as cofactor.

The protein resides in the cytoplasm. Its function is as follows. Exhibits a very high intrinsic GTPase hydrolysis rate. Involved in the addition of a carboxymethylaminomethyl (cmnm) group at the wobble position (U34) of certain tRNAs, forming tRNA-cmnm(5)s(2)U34. The protein is tRNA modification GTPase MnmE of Yersinia enterocolitica serotype O:8 / biotype 1B (strain NCTC 13174 / 8081).